The following is a 476-amino-acid chain: Cytosolic iron-sulfur assembly component 3 (476 aa).

N-acetylalanine is present on alanine 2. [4Fe-4S] cluster contacts are provided by cysteine 24, cysteine 71, cysteine 74, cysteine 77, cysteine 190, cysteine 246, cysteine 395, and cysteine 399.

This sequence belongs to the NARF family. As to quaternary structure, external component of the CIA complex. In the CIA complex, interacts directly with CIAO1 and MMS19.

In terms of biological role, component of the cytosolic iron-sulfur protein assembly (CIA) complex, a multiprotein complex that mediates the incorporation of iron-sulfur cluster into extramitochondrial Fe/S proteins. Seems to negatively regulate the level of HIF1A expression, although this effect could be indirect. The polypeptide is Cytosolic iron-sulfur assembly component 3 (Pongo abelii (Sumatran orangutan)).